A 467-amino-acid polypeptide reads, in one-letter code: tRNA-2-methylthio-N(6)-dimethylallyladenosine synthase (467 aa).

The MTTase N-terminal domain occupies 5–125; the sequence is RKLHIKSYGC…LPQLLAQASR (121 aa). [4Fe-4S] cluster-binding residues include C14, C50, C88, C166, C170, and C173. The 233-residue stretch at 152-384 folds into the Radical SAM core domain; the sequence is RARGVSAFVT…QSLIDSQQAA (233 aa). Residues 387–449 form the TRAM domain; it reads KAAIGSVVDV…RYSLLGELVA (63 aa).

It belongs to the methylthiotransferase family. MiaB subfamily. Monomer. [4Fe-4S] cluster is required as a cofactor.

Its subcellular location is the cytoplasm. The enzyme catalyses N(6)-dimethylallyladenosine(37) in tRNA + (sulfur carrier)-SH + AH2 + 2 S-adenosyl-L-methionine = 2-methylsulfanyl-N(6)-dimethylallyladenosine(37) in tRNA + (sulfur carrier)-H + 5'-deoxyadenosine + L-methionine + A + S-adenosyl-L-homocysteine + 2 H(+). Functionally, catalyzes the methylthiolation of N6-(dimethylallyl)adenosine (i(6)A), leading to the formation of 2-methylthio-N6-(dimethylallyl)adenosine (ms(2)i(6)A) at position 37 in tRNAs that read codons beginning with uridine. The chain is tRNA-2-methylthio-N(6)-dimethylallyladenosine synthase from Bradyrhizobium sp. (strain ORS 278).